A 110-amino-acid chain; its full sequence is MKFVLLFGVLLVTLFSYSSAEMLDDFDQADEDELLSLIEKEEARKDCIPKHHECTSNKHGCCRGHLFKYKCQCTTVVTQSGEETERCFCGTPPHHKAAELVVGFGKKIFG.

Positions 1–20 are cleaved as a signal peptide; it reads MKFVLLFGVLLVTLFSYSSA. The propeptide occupies 21 to 44; that stretch reads EMLDDFDQADEDELLSLIEKEEAR. 4 disulfide bridges follow: Cys47–Cys62, Cys54–Cys71, Cys61–Cys89, and Cys73–Cys87.

This sequence belongs to the neurotoxin 19 (CSTX) family. 03 subfamily. Expressed by the venom gland.

Its subcellular location is the secreted. The polypeptide is U1-lycotoxin-Ls1ii (Lycosa singoriensis (Wolf spider)).